The sequence spans 1019 residues: UPF0182 protein Tery_0938 (1019 aa).

9 helical membrane-spanning segments follow: residues 23 to 43 (IHIL…GFST), 67 to 87 (TETW…LVNL), 128 to 148 (LSLS…GLIL), 192 to 212 (LWLL…PILW), 213 to 233 (LSVF…SHWA), 270 to 290 (FWLI…YLLS), 313 to 333 (LGGG…FELL), 355 to 375 (YVFL…QAIF), and 416 to 436 (AILT…PKIV).

It belongs to the UPF0182 family.

The protein resides in the cell membrane. In Trichodesmium erythraeum (strain IMS101), this protein is UPF0182 protein Tery_0938.